Consider the following 434-residue polypeptide: Homogentisate 1,2-dioxygenase (434 aa).

Histidine 289 serves as the catalytic Proton acceptor. Fe cation contacts are provided by histidine 332 and glutamate 338. The homogentisate site is built by tyrosine 347 and histidine 368. Position 368 (histidine 368) interacts with Fe cation.

Belongs to the homogentisate dioxygenase family. In terms of assembly, hexamer; dimer of trimers. The cofactor is Fe cation.

The enzyme catalyses homogentisate + O2 = 4-maleylacetoacetate + H(+). Its pathway is amino-acid degradation; L-phenylalanine degradation; acetoacetate and fumarate from L-phenylalanine: step 4/6. Functionally, involved in the catabolism of homogentisate (2,5-dihydroxyphenylacetate or 2,5-OH-PhAc), a central intermediate in the degradation of phenylalanine and tyrosine. Catalyzes the oxidative ring cleavage of the aromatic ring of homogentisate to yield maleylacetoacetate. The chain is Homogentisate 1,2-dioxygenase from Pseudomonas syringae pv. tomato (strain ATCC BAA-871 / DC3000).